The sequence spans 97 residues: Nucleoid-associated protein HPP12_0031 (97 aa).

It belongs to the YbaB/EbfC family. In terms of assembly, homodimer.

The protein resides in the cytoplasm. It is found in the nucleoid. Functionally, binds to DNA and alters its conformation. May be involved in regulation of gene expression, nucleoid organization and DNA protection. This Helicobacter pylori (strain P12) protein is Nucleoid-associated protein HPP12_0031.